The following is a 339-amino-acid chain: DNA-directed RNA polymerase RPB7 homolog (339 aa).

This sequence belongs to the Asfivirus DNA-directed RNA polymerase RPB7 homolog family. As to quaternary structure, part of the viral DNA-directed RNA polymerase that consists of 8 polII-like subunits (RPB1, RPB2, RPB3, RPB5, RPB6, RPB7, RPB9, RPB10), a capping enzyme and a termination factor.

It localises to the host cytoplasm. The protein resides in the virion. In terms of biological role, component of the DNA-directed RNA polymerase (RNAP) that catalyzes the transcription in the cytoplasm of viral DNA into RNA using the four ribonucleoside triphosphates as substrates. This chain is DNA-directed RNA polymerase RPB7 homolog, found in Ornithodoros (relapsing fever ticks).